The primary structure comprises 1453 residues: Chromatin remodeling regulator CECR2 (1453 aa).

Residues 170–237 form a disordered region; sequence VQGRSNGELS…DLQTRNGSRG (68 aa). Residues 197 to 209 show a composition bias toward basic residues; sequence TGKRRGRPPKRKK. Positions 210–222 are enriched in basic and acidic residues; that stretch reads LQEEIISSEKQEE. A compositionally biased stretch (polar residues) spans 223–234; it reads NSLTSDLQTRNG. At Ser402 the chain carries Phosphoserine. In terms of domain architecture, Bromo spans 414–518; it reads FELDDDFTAM…RCFHRAMTKH (105 aa). A Phosphothreonine modification is found at Thr526. Disordered regions lie at residues 536–667, 767–796, 827–868, 884–1020, 1046–1072, 1131–1308, 1331–1368, and 1396–1453; these read EKRE…HPPF, HGTT…TLGH, GYMQ…GESM, VCPP…DNSY, VVGE…LCPR, LASM…YLYG, MLQT…VATQ, and QTGT…LDQS. At Ser551 the chain carries Phosphoserine. The segment covering 637 to 649 has biased composition (polar residues); the sequence is GSLQGSDPTNLHG. The segment covering 655-664 has biased composition (pro residues); the sequence is EAPPGEPLQH. Over residues 887-905 the composition is skewed to pro residues; the sequence is PGVPYHPRQPTPPQLPGPF. Phosphoserine is present on Ser983. Positions 985–998 are enriched in basic and acidic residues; the sequence is QERETEDSQLKSDA. The segment covering 999–1020 has biased composition (polar residues); it reads SDSADTYKTSKNKNTWPLDNSY. 2 positions are modified to asymmetric dimethylarginine: Arg1166 and Arg1172. 2 stretches are compositionally biased toward low complexity: residues 1173–1187 and 1202–1211; these read YSYQ…HPYQ and QRSLPSQRSP. Residues 1228–1250 are compositionally biased toward polar residues; it reads NVLSSLQGCETLNTALTSPTQMD. Over residues 1265–1289 the composition is skewed to basic and acidic residues; sequence GPEEEKMDESVERPESPKEFLDLDN. At Ser1280 the chain carries Phosphoserine. 2 stretches are compositionally biased toward polar residues: residues 1291 to 1304 and 1331 to 1346; these read NAAT…STSD and MLQT…SASH. Over residues 1352-1364 the composition is skewed to pro residues; that stretch reads YPSPVPAHPPPHP.

Component of the CERF-1 ISWI chromatin remodeling complex (also called the CECR2-containing remodeling factor (CERF) complex) at least composed of CECR2 and SMARCA1. Component of the CERF-5 ISWI chromatin remodeling complex at least composed of CECR2 and SMARCA5/SNF2H. LUZP1 is detected as part of the CERF-1 and CERF-5 complexes in embryonic stem (ES) cells where it is involved in complex stabilization but is not detected in the complexes in the testis. Interacts with CCAR2; CCAR2 may form part of the CERF-1 and/or CEF-5 ISWI chromatin remodeling complexes in ES cells. Interacts with acetylated lysine residues on histone H2A and H3 (in vitro). Interacts with LRPPRC.

It localises to the nucleus. Functionally, regulatory subunit of the ATP-dependent CERF-1 and CERF-5 ISWI chromatin remodeling complexes, which form ordered nucleosome arrays on chromatin and facilitate access to DNA during DNA-templated processes such as DNA replication, transcription, and repair. The complexes do not have the ability to slide mononucleosomes to the center of a DNA template. The CERF-1 ISWI chromatin remodeling complex has a lower ATP hydrolysis rate than the CERF-5 ISWI chromatin remodeling complex. Plays a role in various processes during development: required during embryogenesis for neural tube closure and inner ear development. In adults, required for spermatogenesis, via the formation of ISWI-type chromatin complexes. In histone-modifying complexes, CECR2 recognizes and binds acylated histones: binds histones that are acetylated and/or butyrylated. May also be involved through its interaction with LRPPRC in the integration of cytoskeletal network with vesicular trafficking, nucleocytosolic shuttling, transcription, chromosome remodeling and cytokinesis. The protein is Chromatin remodeling regulator CECR2 of Mus musculus (Mouse).